Here is a 346-residue protein sequence, read N- to C-terminus: Dynein regulatory complex protein 9 (346 aa).

Basic and acidic residues predominate over residues methionine 299 to alanine 308. The interval methionine 299 to lysine 346 is disordered. The IQ domain maps to glutamate 305 to lysine 334. A compositionally biased stretch (basic residues) spans lysine 323 to lysine 346.

The protein belongs to the DRC9 family. Component of the nexin-dynein regulatory complex (N-DRC). Interacts (via IQ domain) with calmodulin when calcium levels are low. Does not interact with calmodulin in the presence of Ca(2+). Interacts with hsp70 and may form a complex with camk4 and hsp70. As to expression, detected in adult testis, and at lower levels in brain, kidney and ovary.

The protein localises to the cytoplasm. It is found in the cell projection. Its subcellular location is the cilium. It localises to the flagellum. The protein resides in the cytoskeleton. The protein localises to the flagellum axoneme. In terms of biological role, component of the nexin-dynein regulatory complex (N-DRC), a key regulator of ciliary/flagellar motility which maintains the alignment and integrity of the distal axoneme and regulates microtubule sliding in motile axonemes. Binds calmodulin when cellular Ca(2+) levels are low and thereby contributes to the regulation of calcium and calmodulin-dependent protein kinase IV (camk4) activity; contributes to the regulation of camk4 signaling cascades. Plays a role in the regulation of definitive hematopoiesis via its effects on camk4. The chain is Dynein regulatory complex protein 9 from Danio rerio (Zebrafish).